The sequence spans 136 residues: Histone H3 (136 aa).

Positions 1-45 (MARTKQTARKSTGGKAPRKQLATKAARKSAPATGGVKKPHRYRPG) are disordered. Residue Lys5 is modified to N6,N6,N6-trimethyllysine; alternate. Lys5 carries the N6,N6-dimethyllysine; alternate modification. An N6-methyllysine; alternate mark is found at Lys5 and Lys10. An N6-acetyllysine; alternate modification is found at Lys10. A Phosphoserine modification is found at Ser11. Lys15 bears the N6,N6-dimethyllysine; alternate mark. N6-methyllysine; alternate occurs at positions 15, 19, 24, 28, and 37. N6-acetyllysine; alternate occurs at positions 15, 19, 24, 28, and 37. 2 positions are modified to N6,N6,N6-trimethyllysine; alternate: Lys28 and Lys37. N6,N6-dimethyllysine; alternate is present on residues Lys28 and Lys37. Lys57 and Lys65 each carry N6-acetyllysine. N6,N6,N6-trimethyllysine; alternate is present on Lys80. The residue at position 80 (Lys80) is an N6,N6-dimethyllysine; alternate. Lys80 bears the N6-methyllysine; alternate mark.

It belongs to the histone H3 family. In terms of assembly, the nucleosome is a histone octamer containing two molecules each of H2A, H2B, H3 and H4 assembled in one H3-H4 heterotetramer and two H2A-H2B heterodimers. The octamer wraps approximately 147 bp of DNA. Post-translationally, phosphorylated to form H3S10ph. H3S10ph promotes subsequent H3K14ac formation and is required for transcriptional activation through TBP recruitment to the promoters. In terms of processing, mono-, di- and trimethylated by the COMPASS complex to form H3K4me1/2/3. H3K4me activates gene expression by regulating transcription elongation and plays a role in telomere length maintenance. H3K4me enrichment correlates with transcription levels, and occurs in a 5' to 3' gradient with H3K4me3 enrichment at the 5'-end of genes, shifting to H3K4me2 and then H3K4me1. Methylated by SET2 to form H3K36me. H3K36me represses gene expression. Methylated by DOT1 to form H3K79me. H3K79me is required for association of SIR proteins with telomeric regions and for telomeric silencing. The COMPASS-mediated formation of H3K4me2/3 and the DOT1-mediated formation of H3K79me require H2BK123ub1. Acetylation of histone H3 leads to transcriptional activation. H3K14ac formation by GCN5 is promoted by H3S10ph. H3K14ac can also be formed by ESA1. H3K56ac formation occurs predominantly in newly synthesized H3 molecules during G1, S and G2/M of the cell cycle and may be involved in DNA repair.

It is found in the nucleus. It localises to the chromosome. Core component of nucleosome. Nucleosomes wrap and compact DNA into chromatin, limiting DNA accessibility to the cellular machineries which require DNA as a template. Histones thereby play a central role in transcription regulation, DNA repair, DNA replication and chromosomal stability. DNA accessibility is regulated via a complex set of post-translational modifications of histones, also called histone code, and nucleosome remodeling. The sequence is that of Histone H3 (H3.1) from Mortierella alpina (Oleaginous fungus).